The following is a 328-amino-acid chain: Formimidoylglutamase (328 aa).

The Mn(2+) site is built by histidine 133, aspartate 159, histidine 161, aspartate 163, aspartate 253, and aspartate 255.

Belongs to the arginase family. Requires Mn(2+) as cofactor.

It carries out the reaction N-formimidoyl-L-glutamate + H2O = formamide + L-glutamate. It functions in the pathway amino-acid degradation; L-histidine degradation into L-glutamate; L-glutamate from N-formimidoyl-L-glutamate (hydrolase route): step 1/1. In terms of biological role, catalyzes the conversion of N-formimidoyl-L-glutamate to L-glutamate and formamide. The chain is Formimidoylglutamase from Streptococcus pyogenes serotype M28 (strain MGAS6180).